Consider the following 513-residue polypeptide: MSDTTLEKIIVLDYGSQYNQLIARRIREIGVFSELMSHKVTAKEIREINPIGIILSGGPNSVYDEGSFDIDPEIFELGLPVLGICYGMQLMSYKLGGMVEAAGEREYGVAPLQLTEKSALFAGTPEVQDVLMSHGDRVTAIPEGFHVVGTSPNSPFAAVENTERNLYGIQFHPEVRHSVHGTEMLRNFALNTCGAKGNWSMENFIDMQIKDVREKVGDKKVLLGLSGGVDSSVVGVLLQRAIGDQLTSIFVDHGFLRKGEADQVMETLGGKFGLNIIKVDAQKRFMDKLVGLSDPETKRKIIGNEFVYVFDDEANKLEGVDFLAQGTLYTDVIESGTDTAQTIKSHHNVGGLPEDMQFQLIEPLNTLFKDEVRALGTQLGMPDEIVWRQPFPGPGLAIRVLGDLTEEKLETVRESDAILREEIAASGLERDVWQYFTVNTDVKSVGVMGDQRTYDYTLAIRAITSIDGMTADFAQLPWDLLQKISKRIVNEVDHVNRIVYDITSKPPATVEWQ.

The region spanning 8 to 198 (KIIVLDYGSQ…ALNTCGAKGN (191 aa)) is the Glutamine amidotransferase type-1 domain. Residue Cys85 is the Nucleophile of the active site. Active-site residues include His172 and Glu174. The region spanning 199-388 (WSMENFIDMQ…LGMPDEIVWR (190 aa)) is the GMPS ATP-PPase domain. Residue 226–232 (SGGVDSS) participates in ATP binding.

As to quaternary structure, homodimer.

The catalysed reaction is XMP + L-glutamine + ATP + H2O = GMP + L-glutamate + AMP + diphosphate + 2 H(+). It functions in the pathway purine metabolism; GMP biosynthesis; GMP from XMP (L-Gln route): step 1/1. Catalyzes the synthesis of GMP from XMP. The protein is GMP synthase [glutamine-hydrolyzing] of Lactococcus lactis subsp. cremoris (strain SK11).